A 249-amino-acid chain; its full sequence is Probable septum site-determining protein MinC (249 aa).

The tract at residues 116–149 (AAVSPPPPPPPPPARAEPAAPVARPAPGRMQRNA) is disordered. The segment covering 119 to 130 (SPPPPPPPPPAR) has biased composition (pro residues). Residues 131–142 (AEPAAPVARPAP) are compositionally biased toward low complexity.

Belongs to the MinC family. Interacts with MinD and FtsZ.

Functionally, cell division inhibitor that blocks the formation of polar Z ring septums. Rapidly oscillates between the poles of the cell to destabilize FtsZ filaments that have formed before they mature into polar Z rings. Prevents FtsZ polymerization. The polypeptide is Probable septum site-determining protein MinC (Xanthomonas campestris pv. campestris (strain B100)).